Consider the following 459-residue polypeptide: tRNA modification GTPase MnmE (459 aa).

(6S)-5-formyl-5,6,7,8-tetrahydrofolate-binding residues include Arg20, Glu85, and Arg124. The 160-residue stretch at 221–380 (GLSTVIIGRP…LEMAIQSLFF (160 aa)) folds into the TrmE-type G domain. Asn231 contributes to the K(+) binding site. Residues 231 to 236 (NVGKSS), 250 to 256 (TDIPGTT), and 275 to 278 (DTAG) each bind GTP. Residue Ser235 participates in Mg(2+) binding. K(+) contacts are provided by Thr250, Ile252, and Thr255. Mg(2+) is bound at residue Thr256. Residue Lys459 participates in (6S)-5-formyl-5,6,7,8-tetrahydrofolate binding.

This sequence belongs to the TRAFAC class TrmE-Era-EngA-EngB-Septin-like GTPase superfamily. TrmE GTPase family. In terms of assembly, homodimer. Heterotetramer of two MnmE and two MnmG subunits. K(+) is required as a cofactor.

Its subcellular location is the cytoplasm. Exhibits a very high intrinsic GTPase hydrolysis rate. Involved in the addition of a carboxymethylaminomethyl (cmnm) group at the wobble position (U34) of certain tRNAs, forming tRNA-cmnm(5)s(2)U34. The protein is tRNA modification GTPase MnmE of Bacillus pumilus (strain SAFR-032).